The chain runs to 309 residues: Homoserine O-acetyltransferase (309 aa).

Residue Cys142 is the Acyl-thioester intermediate of the active site. Residues Lys163 and Ser192 each contribute to the substrate site. His235 acts as the Proton acceptor in catalysis. Residue Glu237 is part of the active site. Arg249 is a binding site for substrate.

This sequence belongs to the MetA family.

The protein localises to the cytoplasm. It catalyses the reaction L-homoserine + acetyl-CoA = O-acetyl-L-homoserine + CoA. Its pathway is amino-acid biosynthesis; L-methionine biosynthesis via de novo pathway; O-acetyl-L-homoserine from L-homoserine: step 1/1. Its function is as follows. Transfers an acetyl group from acetyl-CoA to L-homoserine, forming acetyl-L-homoserine. The polypeptide is Homoserine O-acetyltransferase (Allorhizobium ampelinum (strain ATCC BAA-846 / DSM 112012 / S4) (Agrobacterium vitis (strain S4))).